Consider the following 329-residue polypeptide: MTSTVQSPLYSRVFSAVFYGVISVLIVFVNKILLTNYKFPSFLFVGVGQMMATILILFFAKMFRIVQFPSLDSSIPRKIMPLPLLYFFNLISGLGGTQMINLPMFTVLRRFSILMTMILEFYILNVKASKAVKISVGLMIGGSFIAAIYDLSFDALGYTMIFINNICTAALGVYTKQKLDAKDLGKYGLMFYNCLFMLLPALCVVQYTGDLDRAYSFMLSDSMTSSVWTCFLLSCICGFVLNYSLVLCTHHNSALTTTCVGPIKNLFVTYVGMFSSGDYVFQWANFTGINVSVFGSILYTYVTFRSKSTTISYKPLPMTMPIDVHKPRN.

9 consecutive transmembrane segments (helical) span residues 15–34, 41–63, 86–108, 129–151, 155–174, 187–209, 224–246, 253–275, and 280–302; these read SAVF…KILL, SFLF…AKMF, YFFN…FTVL, SKAV…IYDL, ALGY…LGVY, YGLM…QYTG, TSSV…YSLV, SALT…GMFS, and VFQW…YTYV.

This sequence belongs to the TPT transporter family. SLC35D subfamily.

Its subcellular location is the golgi apparatus membrane. In terms of biological role, acts as a transporter of UDP-glucuronic acid (UDP-GlcA), UDP-N-acetylgalactosamine (UDP-GalNAc) and UDP-galactose (UDP-Gal) from the cytoplasm into the Golgi lumen. Involved in the biosynthesis of glycoconjugates that play a pivotal role in development. Involved in the synthesis of chondroitin sulfate and heparan sulfate proteoglycans. Required for embryonic development. Involved in vulva epithelium invagination and embryonic development. Involved in the directed migration of hermaphrodite-specific neurons. This is UDP-sugar transporter sqv-7 (sqv-7) from Caenorhabditis elegans.